A 309-amino-acid chain; its full sequence is Taste receptor type 2 member 8 (309 aa).

Residues 1-7 are Extracellular-facing; the sequence is MFSPADN. A helical membrane pass occupies residues 8–28; the sequence is IFIILITGEFILGILGNGYIA. Topologically, residues 29–50 are cytoplasmic; it reads LVNWIDWIKKKKISTTDYILTN. A helical transmembrane segment spans residues 51 to 71; sequence LVISRICLISVIVVNGIVTVL. Residues 72–82 lie on the Extracellular side of the membrane; it reads YPDVYTKSKLQ. Residues 83–103 traverse the membrane as a helical segment; it reads IAISTFWTFANYLNMWFTTCL. The Cytoplasmic portion of the chain corresponds to 104–131; that stretch reads NVFYFLKIANSSHPLFLWLKQKIDMVVR. The chain crosses the membrane as a helical span at residues 132 to 152; the sequence is WILLGCFAISLLVSLIIAIVL. Residues 153-184 are Extracellular-facing; it reads SRDYRFHAIAKHKRNITEMFHVSKMLYFEPLT. N-linked (GlcNAc...) asparagine glycosylation is present at Asn-167. A helical transmembrane segment spans residues 185–205; sequence LFNLLAIVPFIVSLMSFFLLV. The Cytoplasmic portion of the chain corresponds to 206-239; it reads RSLQRHTKQIKLYATGGRDPSTEAHVRAIKTMTS. A helical membrane pass occupies residues 240–260; that stretch reads FIFFFFLYYITSLLVTFSYLM. Over 261 to 266 the chain is Extracellular; it reads TKYKLA. Residues 267-287 traverse the membrane as a helical segment; it reads MAFGEIVAILYPSGHSFILII. Residues 288–309 are Cytoplasmic-facing; that stretch reads LNNKLRQASVRMLTCIKITCVI.

This sequence belongs to the G-protein coupled receptor T2R family.

The protein resides in the membrane. Receptor that may play a role in the perception of bitterness and is gustducin-linked. May play a role in sensing the chemical composition of the gastrointestinal content. The activity of this receptor may stimulate alpha gustducin, mediate PLC-beta-2 activation and lead to the gating of TRPM5. The polypeptide is Taste receptor type 2 member 8 (TAS2R8) (Pongo pygmaeus (Bornean orangutan)).